The chain runs to 263 residues: Acyl-[acyl-carrier-protein]--UDP-N-acetylglucosamine O-acyltransferase (263 aa).

The protein belongs to the transferase hexapeptide repeat family. LpxA subfamily. In terms of assembly, homotrimer.

It is found in the cytoplasm. The enzyme catalyses a (3R)-hydroxyacyl-[ACP] + UDP-N-acetyl-alpha-D-glucosamine = a UDP-3-O-[(3R)-3-hydroxyacyl]-N-acetyl-alpha-D-glucosamine + holo-[ACP]. It functions in the pathway glycolipid biosynthesis; lipid IV(A) biosynthesis; lipid IV(A) from (3R)-3-hydroxytetradecanoyl-[acyl-carrier-protein] and UDP-N-acetyl-alpha-D-glucosamine: step 1/6. Involved in the biosynthesis of lipid A, a phosphorylated glycolipid that anchors the lipopolysaccharide to the outer membrane of the cell. The protein is Acyl-[acyl-carrier-protein]--UDP-N-acetylglucosamine O-acyltransferase of Campylobacter lari (strain RM2100 / D67 / ATCC BAA-1060).